The chain runs to 1142 residues: Desmoglein-2.1 (1142 aa).

The first 18 residues, 1 to 18, serve as a signal peptide directing secretion; sequence MARRISPVVAFLLCFGLS. A propeptide spanning residues 19 to 38 is cleaved from the precursor; it reads HFFEAEARLQHSVALHRQKR. Residues 39 to 643 are Extracellular-facing; it reads EWIVPPQILE…AKKGSRLGPA (605 aa). Cadherin domains lie at 64-148, 156-258, 259-416, and 417-527; these read SDKE…APVF, VDEL…VPTL, GGPY…GPKF, and FPGT…CPTL. N115 carries an N-linked (GlcNAc...) asparagine glycan. The tract at residues 369 to 389 is disordered; that stretch reads SGAAGGAGAMGGASGSGGGTG. Residues N490 and N576 are each glycosylated (N-linked (GlcNAc...) asparagine). Residues 644 to 664 form a helical membrane-spanning segment; sequence GIGLLLLALLALLLIPLLLLL. Residues 665–1142 are Cytoplasmic-facing; sequence CTCGMTGAFT…RKVVTTQSVK (478 aa). 4 Desmoglein repeat repeats span residues 948 to 974, 975 to 998, 999 to 1039, and 1040 to 1071; these read VEQQ…NSGP, VAEG…ERMV, LVFR…VLQG, and TIQR…NGIS.

The protein resides in the cell junction. It is found in the desmosome. It localises to the cell membrane. Its subcellular location is the cytoplasm. A component of desmosome cell-cell junctions which are required for positive regulation of cellular adhesion. Involved in the interaction of plaque proteins and intermediate filaments mediating cell-cell adhesion. Required for embryogenesis, specifically for progression of epiboly and normal convergence-extension movements during gastrulation. This chain is Desmoglein-2.1, found in Danio rerio (Zebrafish).